The chain runs to 208 residues: Cysteine-rich protein 2 (208 aa).

Residues 5–57 (CPKCDKTVYFAEKVSSLGKDWHRFCLRCEHCSKTLTPGGHAEHDGKPFCHKPC) enclose the LIM zinc-binding 1 domain. The residue at position 23 (Lys23) is an N6-acetyllysine. The disordered stretch occupies residues 98–117 (TEERKASGPPKGPSKASSVT). Ser104 is modified (phosphoserine). Positions 104-115 (SGPPKGPSKASS) are enriched in low complexity. Residues 126 to 178 (CPRCNKRVYFAEKVTSLGKDWHRPCLRCERCGKTLTPGGHAEHDGQPYCHKPC) form the LIM zinc-binding 2 domain. N6-acetyllysine occurs at positions 138 and 144.

As to quaternary structure, interacts with TGFB1I1.

The sequence is that of Cysteine-rich protein 2 (CRIP2) from Bos taurus (Bovine).